The following is a 237-amino-acid chain: Lectin ConGF (237 aa).

Mn(2+)-binding residues include Glu8 and Asp10. The Ca(2+) site is built by Asp10, Tyr12, Asn14, and Asp19. Residue Asn14 participates in a carbohydrate binding. Mn(2+) is bound by residues Asp19 and His24. The a carbohydrate site is built by Leu99, Tyr100, Asp208, and Arg228.

Belongs to the leguminous lectin family. In terms of assembly, homotetramer; dimer of dimers. In terms of processing, concanavalin A-like lectins of the Diocleinae subtribe undergo proteolytic processing referred to as circular permutation. The propeptide is split into an N-terminal and a C-terminal part, the gamma and beta chain, respectively. These are then religated in beta-gamma order to form the mature alpha chain. The beta and gamma chains can often be detected in cell extracts. Residues 1-118 of the mature chain, as displayed here, probably constitute the beta chain in the propeptide, residues 119-237 the gamma chain.

Lectin. Induces paw edema in mice. Has a weak vasorelaxant effect on rat aorta. Has anti-inflammatory and anti-nociceptive effects. The protein is Lectin ConGF of Canavalia grandiflora (Jackbean).